A 97-amino-acid chain; its full sequence is Small ribosomal subunit protein uS19 (97 aa).

Belongs to the universal ribosomal protein uS19 family.

Its function is as follows. Protein S19 forms a complex with S13 that binds strongly to the 16S ribosomal RNA. This chain is Small ribosomal subunit protein uS19, found in Pelagibacter ubique (strain HTCC1062).